The chain runs to 471 residues: Mannose-1-phosphate guanylyltransferase (471 aa).

Belongs to the mannose-6-phosphate isomerase type 2 family.

The enzyme catalyses alpha-D-mannose 1-phosphate + GTP + H(+) = GDP-alpha-D-mannose + diphosphate. It functions in the pathway nucleotide-sugar biosynthesis; GDP-alpha-D-mannose biosynthesis; GDP-alpha-D-mannose from alpha-D-mannose 1-phosphate (GTP route): step 1/1. In terms of biological role, involved in the biosynthesis of the K2 capsular polysaccharide biosynthesis. This chain is Mannose-1-phosphate guanylyltransferase (manC), found in Klebsiella pneumoniae.